A 480-amino-acid chain; its full sequence is Porphobilinogen deaminase, chloroplastic (480 aa).

Residues 1–139 constitute a chloroplast transit peptide; that stretch reads MYCGRYETIG…VSGGRIWSLA (139 aa). Cys-395 is modified (S-(dipyrrolylmethanemethyl)cysteine).

It belongs to the HMBS family. Dipyrromethane serves as cofactor.

The protein localises to the plastid. It localises to the chloroplast. It catalyses the reaction 4 porphobilinogen + H2O = hydroxymethylbilane + 4 NH4(+). Its pathway is porphyrin-containing compound metabolism; protoporphyrin-IX biosynthesis; coproporphyrinogen-III from 5-aminolevulinate: step 2/4. It functions in the pathway porphyrin-containing compound metabolism; chlorophyll biosynthesis. Its function is as follows. Tetrapolymerization of the monopyrrole PBG into the hydroxymethylbilane pre-uroporphyrinogen in several discrete steps. This Euglena gracilis protein is Porphobilinogen deaminase, chloroplastic.